Reading from the N-terminus, the 609-residue chain is Arginine--tRNA ligase (609 aa).

Positions 132–142 (ANPTSSLHVGH) match the 'HIGH' region motif.

The protein belongs to the class-I aminoacyl-tRNA synthetase family. Monomer.

The protein localises to the cytoplasm. It carries out the reaction tRNA(Arg) + L-arginine + ATP = L-arginyl-tRNA(Arg) + AMP + diphosphate. The sequence is that of Arginine--tRNA ligase from Psychrobacter cryohalolentis (strain ATCC BAA-1226 / DSM 17306 / VKM B-2378 / K5).